Reading from the N-terminus, the 150-residue chain is Small ribosomal subunit protein uS11 (150 aa).

It belongs to the universal ribosomal protein uS11 family. In terms of assembly, part of the 30S ribosomal subunit. Interacts with proteins S7 and S18. Binds to IF-3.

In terms of biological role, located on the platform of the 30S subunit, it bridges several disparate RNA helices of the 16S rRNA. Forms part of the Shine-Dalgarno cleft in the 70S ribosome. In Pelagibacter ubique (strain HTCC1062), this protein is Small ribosomal subunit protein uS11.